We begin with the raw amino-acid sequence, 342 residues long: Probable dual-specificity RNA methyltransferase RlmN (342 aa).

Glutamate 91 acts as the Proton acceptor in catalysis. One can recognise a Radical SAM core domain in the interval tyrosine 97–aspartate 326. Cysteine 104 and cysteine 331 are joined by a disulfide. Residues cysteine 111, cysteine 115, and cysteine 118 each coordinate [4Fe-4S] cluster. S-adenosyl-L-methionine is bound by residues glycine 157–glutamate 158, serine 189, serine 212–histidine 214, and asparagine 288. Cysteine 331 functions as the S-methylcysteine intermediate in the catalytic mechanism.

This sequence belongs to the radical SAM superfamily. RlmN family. [4Fe-4S] cluster serves as cofactor.

The protein localises to the cytoplasm. The catalysed reaction is adenosine(2503) in 23S rRNA + 2 reduced [2Fe-2S]-[ferredoxin] + 2 S-adenosyl-L-methionine = 2-methyladenosine(2503) in 23S rRNA + 5'-deoxyadenosine + L-methionine + 2 oxidized [2Fe-2S]-[ferredoxin] + S-adenosyl-L-homocysteine. The enzyme catalyses adenosine(37) in tRNA + 2 reduced [2Fe-2S]-[ferredoxin] + 2 S-adenosyl-L-methionine = 2-methyladenosine(37) in tRNA + 5'-deoxyadenosine + L-methionine + 2 oxidized [2Fe-2S]-[ferredoxin] + S-adenosyl-L-homocysteine. Its function is as follows. Specifically methylates position 2 of adenine 2503 in 23S rRNA and position 2 of adenine 37 in tRNAs. This is Probable dual-specificity RNA methyltransferase RlmN from Thermoanaerobacter pseudethanolicus (strain ATCC 33223 / 39E) (Clostridium thermohydrosulfuricum).